The sequence spans 339 residues: Biotin synthase (339 aa).

The Radical SAM core domain maps to 55–282; that stretch reads NAVQLSTLLS…KAVVRLSAGR (228 aa). [4Fe-4S] cluster contacts are provided by Cys70, Cys74, and Cys77. 4 residues coordinate [2Fe-2S] cluster: Cys114, Cys145, Cys205, and Arg277.

It belongs to the radical SAM superfamily. Biotin synthase family. As to quaternary structure, homodimer. The cofactor is [4Fe-4S] cluster. Requires [2Fe-2S] cluster as cofactor.

The enzyme catalyses (4R,5S)-dethiobiotin + (sulfur carrier)-SH + 2 reduced [2Fe-2S]-[ferredoxin] + 2 S-adenosyl-L-methionine = (sulfur carrier)-H + biotin + 2 5'-deoxyadenosine + 2 L-methionine + 2 oxidized [2Fe-2S]-[ferredoxin]. Its pathway is cofactor biosynthesis; biotin biosynthesis; biotin from 7,8-diaminononanoate: step 2/2. In terms of biological role, catalyzes the conversion of dethiobiotin (DTB) to biotin by the insertion of a sulfur atom into dethiobiotin via a radical-based mechanism. The protein is Biotin synthase of Burkholderia vietnamiensis (strain G4 / LMG 22486) (Burkholderia cepacia (strain R1808)).